We begin with the raw amino-acid sequence, 327 residues long: RING-H2 finger protein ATL34 (327 aa).

The N-terminal stretch at 1–26 (MTIGKSPILLHHHVIFLLLLVLQVSG) is a signal peptide. The helical transmembrane segment at 47–67 (AVIIAMLMFTLLFSMLACCVC) threads the bilayer. The RING-type; atypical zinc-finger motif lies at 128–170 (CAICLNEFEDEETLRLMPPCSHAFHASCIDVWLSSRSTCPVCR). The segment at 280-327 (LSHMKTLPQARSSREGYRSGSVGSERRGKGKEKEFGEGSFDRLKAEMV) is disordered. The segment covering 303-327 (SERRGKGKEKEFGEGSFDRLKAEMV) has biased composition (basic and acidic residues).

It belongs to the RING-type zinc finger family. ATL subfamily.

Its subcellular location is the membrane. The catalysed reaction is S-ubiquitinyl-[E2 ubiquitin-conjugating enzyme]-L-cysteine + [acceptor protein]-L-lysine = [E2 ubiquitin-conjugating enzyme]-L-cysteine + N(6)-ubiquitinyl-[acceptor protein]-L-lysine.. It functions in the pathway protein modification; protein ubiquitination. The polypeptide is RING-H2 finger protein ATL34 (ATL34) (Arabidopsis thaliana (Mouse-ear cress)).